The sequence spans 434 residues: Mitochondrial distribution and morphology protein 12 (434 aa).

The SMP-LTD domain maps to 1–434 (MSIDIDWERA…VYPSFWTFLV (434 aa)). Residues 70 to 83 (YEEDDNENFSESSE) show a composition bias toward acidic residues. Disordered stretches follow at residues 70 to 141 (YEED…LRSP) and 181 to 277 (TPLG…LPPR). Residues 86-97 (SPTREPVDRYGS) show a composition bias toward basic and acidic residues. Residues 215-237 (SAQSRPSTANTGNTLLSRGSMSS) show a composition bias toward polar residues.

The protein belongs to the MDM12 family. Component of the ER-mitochondria encounter structure (ERMES) or MDM complex, composed of MMM1, MDM10, MDM12 and MDM34. An MMM1 homodimer associates with one molecule of MDM12 on each side in a pairwise head-to-tail manner, and the SMP-LTD domains of MMM1 and MDM12 generate a continuous hydrophobic tunnel for phospholipid trafficking.

The protein localises to the mitochondrion outer membrane. The protein resides in the endoplasmic reticulum membrane. Functionally, component of the ERMES/MDM complex, which serves as a molecular tether to connect the endoplasmic reticulum (ER) and mitochondria. Components of this complex are involved in the control of mitochondrial shape and protein biogenesis, and function in nonvesicular lipid trafficking between the ER and mitochondria. MDM12 is required for the interaction of the ER-resident membrane protein MMM1 and the outer mitochondrial membrane-resident beta-barrel protein MDM10. The MDM12-MMM1 subcomplex functions in the major beta-barrel assembly pathway that is responsible for biogenesis of all mitochondrial outer membrane beta-barrel proteins, and acts in a late step after the SAM complex. The MDM10-MDM12-MMM1 subcomplex further acts in the TOM40-specific pathway after the action of the MDM12-MMM1 complex. Essential for establishing and maintaining the structure of mitochondria and maintenance of mtDNA nucleoids. The chain is Mitochondrial distribution and morphology protein 12 from Ajellomyces dermatitidis (strain ER-3 / ATCC MYA-2586) (Blastomyces dermatitidis).